The primary structure comprises 407 residues: 3-oxoacyl-[acyl-carrier-protein] synthase 1 (407 aa).

The Ketosynthase family 3 (KS3) domain occupies 1-405; sequence MKRVVITGLG…GTNVSLIIKK (405 aa). Residues Cys-164, His-299, and His-335 each act as for beta-ketoacyl synthase activity in the active site.

Belongs to the thiolase-like superfamily. Beta-ketoacyl-ACP synthases family. Homodimer.

It localises to the cytoplasm. The enzyme catalyses a fatty acyl-[ACP] + malonyl-[ACP] + H(+) = a 3-oxoacyl-[ACP] + holo-[ACP] + CO2. It carries out the reaction (3Z)-decenoyl-[ACP] + malonyl-[ACP] + H(+) = 3-oxo-(5Z)-dodecenoyl-[ACP] + holo-[ACP] + CO2. It functions in the pathway lipid metabolism; fatty acid biosynthesis. Its function is as follows. Involved in the type II fatty acid elongation cycle. Catalyzes the elongation of a wide range of acyl-ACP by the addition of two carbons from malonyl-ACP to an acyl acceptor. Can also use unsaturated fatty acids. Catalyzes a key reaction in unsaturated fatty acid (UFA) synthesis, the elongation of the cis-3-decenoyl-ACP produced by FabA. This Buchnera aphidicola subsp. Baizongia pistaciae (strain Bp) protein is 3-oxoacyl-[acyl-carrier-protein] synthase 1 (fabB).